The sequence spans 157 residues: 6,7-dimethyl-8-ribityllumazine synthase (157 aa).

5-amino-6-(D-ribitylamino)uracil is bound by residues phenylalanine 24, 56 to 58 (SFE), and 79 to 81 (VLI). Position 84-85 (84-85 (ET)) interacts with (2S)-2-hydroxy-3-oxobutyl phosphate. Residue histidine 87 is the Proton donor of the active site. A 5-amino-6-(D-ribitylamino)uracil-binding site is contributed by phenylalanine 112. Residue arginine 126 participates in (2S)-2-hydroxy-3-oxobutyl phosphate binding.

It belongs to the DMRL synthase family.

The enzyme catalyses (2S)-2-hydroxy-3-oxobutyl phosphate + 5-amino-6-(D-ribitylamino)uracil = 6,7-dimethyl-8-(1-D-ribityl)lumazine + phosphate + 2 H2O + H(+). It participates in cofactor biosynthesis; riboflavin biosynthesis; riboflavin from 2-hydroxy-3-oxobutyl phosphate and 5-amino-6-(D-ribitylamino)uracil: step 1/2. Functionally, catalyzes the formation of 6,7-dimethyl-8-ribityllumazine by condensation of 5-amino-6-(D-ribitylamino)uracil with 3,4-dihydroxy-2-butanone 4-phosphate. This is the penultimate step in the biosynthesis of riboflavin. In Pyrococcus furiosus (strain ATCC 43587 / DSM 3638 / JCM 8422 / Vc1), this protein is 6,7-dimethyl-8-ribityllumazine synthase.